The chain runs to 745 residues: Single-minded homolog 1-A (745 aa).

Residues 1–53 (MKEKSKNAGRTRREKENSEFYELAKLLPLPSAITSQSDKASIIRLTTSYLKMR) enclose the bHLH domain. PAS domains lie at 77–147 (GREL…QPYH) and 218–288 (PPSA…LVKG). Residues 336–745 (EYKGLQLSLD…GTSVIITNGS (410 aa)) enclose the Single-minded C-terminal domain. Positions 350 to 364 (TKPSFTYNSPSNPVT) are enriched in polar residues. Disordered stretches follow at residues 350–413 (TKPS…LTDS) and 529–563 (EDSAVSSAPDGGSASDSGDRFRADQCRSSPQEPSK). Positions 368–387 (RVGKSRVSRTKTKTRLSPYS) match the Nuclear localization signal motif. A compositionally biased stretch (basic residues) spans 369–381 (VGKSRVSRTKTKT). The span at 532–544 (AVSSAPDGGSASD) shows a compositional bias: low complexity.

Efficient DNA binding requires dimerization with another bHLH protein. Heterodimer of sim1a and arnt. Expressed in embryonic forebrain at the eleven somite stage. Detected in brain throughout embryonic development.

The protein localises to the nucleus. Transcriptional factor that may have pleiotropic effects during embryogenesis and in the adult. This chain is Single-minded homolog 1-A (sim1a), found in Danio rerio (Zebrafish).